Reading from the N-terminus, the 146-residue chain is Hemoglobin subunit beta (146 aa).

Residues 2-146 (HWSAEEKQLI…VAHALARKYH (145 aa)) enclose the Globin domain. Residues histidine 63 and histidine 92 each contribute to the heme b site.

The protein belongs to the globin family. As to quaternary structure, heterotetramer of two alpha chains and two beta chains. As to expression, red blood cells.

Involved in oxygen transport from the lung to the various peripheral tissues. This is Hemoglobin subunit beta (HBB) from Columba livia (Rock dove).